The sequence spans 717 residues: MASSSDSEDDSFMAVDQEETVLEGTMDQDEEPHPVLEAEETRHNRSMSELPEEVLEYILSFLSPYQEHKTAALVCKQWYRLIKGVAHQCYHGFMKAVQEGNIQWESRTYPYPGTPITQRFSHSACYYDANQSMYVFGGCTQSSCNAAFNDLWRLDLNSKEWIRPLASGSYPSPKAGATLVVYKDLLVLFGGWTRPSPYPLHQPERFFDEIHTYSPSKNWWNCIVTTHGPPPMAGHSSCVIDDKMIVFGGSLGSRQMSNDVWVLDLEQWAWSKPNISGPSPHPRGGQSQIVIDDATILILGGCGGPNALFKDAWLLHMHSGPWAWQPLKVENEEHGAPELWCHPACRVGQCVVVFSQAPSGRAPLSPSLNSRPSPISATPPALVPETREYRSQSPVRSMDEAPCVNGRWGTLRPRAQRQTPSGSREGSLSPARGDGSPILNGGSLSPGTAAVGGSSLDSPVQAISPSTPSAPEGYDLKIGLSLAPRRGSLPDQKDLRLGSIDLNWDLKPASSSNPMDGMDNRTVGGSMRHPPEQTNGVHTPPHVASALAGAVSPGALRRSLEAIKAMSSKGPSASAALSPPLGSSPGSPGSQSLSSGETVPIPRPGPAQGDGHSLPPIARRLGHHPPQSLNVGKPLYQSMNCKPMQMYVLDIKDTKEKGRVKWKVFNSSSVVGPPETSLHTVVQGRGELIIFGGLMDKKQNVKYYPKTNALYFVRAKR.

Residues 1 to 30 (MASSSDSEDDSFMAVDQEETVLEGTMDQDE) are compositionally biased toward acidic residues. The segment at 1-34 (MASSSDSEDDSFMAVDQEETVLEGTMDQDEEPHP) is disordered. In terms of domain architecture, F-box spans 44–93 (NRSMSELPEEVLEYILSFLSPYQEHKTAALVCKQWYRLIKGVAHQCYHGF). Kelch repeat units follow at residues 132-184 (SMYV…VYKD), 186-242 (LVLF…VIDD), 244-293 (MIVF…VIDD), and 295-342 (TILI…LWCH). Positions 361 to 474 (RAPLSPSLNS…PSTPSAPEGY (114 aa)) are disordered. Low complexity predominate over residues 363–376 (PLSPSLNSRPSPIS). Phosphoserine is present on residues Ser365 and Ser373. Thr378 is modified (phosphothreonine). 2 stretches are compositionally biased toward polar residues: residues 416 to 426 (QRQTPSGSREG) and 455 to 469 (SLDS…STPS). Phosphoserine is present on Ser552. Residues 570–596 (GPSASAALSPPLGSSPGSPGSQSLSSG) are compositionally biased toward low complexity. The interval 570–631 (GPSASAALSP…GHHPPQSLNV (62 aa)) is disordered.

Component of some SCF complex, composed of CUL1, SKP1, RBX1 and FBXO42. Interacts (via the kelch domain) with p53/TP53; interaction is direct.

Functionally, substrate-recognition component of some SCF (SKP1-CUL1-F-box protein)-type E3 ubiquitin ligase complex. Specifically recognizes p53/TP53, promoting its ubiquitination and degradation. This is F-box only protein 42 (FBXO42) from Homo sapiens (Human).